The sequence spans 284 residues: MAIIMDGKALAVNMQEQLQEKVARLKEKEWIVPGLVVIMVGENPASQVYVRNKERAAKKAGFHSKTVNLSESISEEELIEVIEKYNQDPLFHGILVQLPLPNHISEMRILLAIDPKKDVDGFHPMNTGNLWNGRPQMVPCTPAGIMEILREYNVELEGKTAVIIGRSNIVGKPMAQLLLEKNATVTLTHSRTPHLAKVCNKADVLIVAIGRAKFVTEEFVKEGAVVIDVGINRDEEGKLCGDVDFDQVKEKVSMITPVPGGVGPMTITMLMEQTYQAALRSLKG.

NADP(+) is bound by residues 165-167 (GRS), S190, and I231.

Belongs to the tetrahydrofolate dehydrogenase/cyclohydrolase family. As to quaternary structure, homodimer.

The catalysed reaction is (6R)-5,10-methylene-5,6,7,8-tetrahydrofolate + NADP(+) = (6R)-5,10-methenyltetrahydrofolate + NADPH. It catalyses the reaction (6R)-5,10-methenyltetrahydrofolate + H2O = (6R)-10-formyltetrahydrofolate + H(+). It functions in the pathway one-carbon metabolism; tetrahydrofolate interconversion. In terms of biological role, catalyzes the oxidation of 5,10-methylenetetrahydrofolate to 5,10-methenyltetrahydrofolate and then the hydrolysis of 5,10-methenyltetrahydrofolate to 10-formyltetrahydrofolate. This Streptococcus thermophilus (strain ATCC BAA-250 / LMG 18311) protein is Bifunctional protein FolD.